The chain runs to 614 residues: High-affinity choline transporter 1 (614 aa).

A helical transmembrane segment spans residues 6 to 26 (GVVSIVLFYLLILVVGIWAGR). The Cytoplasmic portion of the chain corresponds to 27–44 (KKQSGNDSEEEVMLAGRS). The chain crosses the membrane as a helical span at residues 45–65 (IGLFVGIFTMTATWVGGGYIN). Residues 66 to 75 (GTAEAIYTSG) are Extracellular-facing. Residues 76-96 (LVWCQAPFGYALSLVFGGIFF) form a helical membrane-spanning segment. Over 97 to 119 (ANPMRKQGYITMLDPLQDSFGER) the chain is Cytoplasmic. The chain crosses the membrane as a helical span at residues 120 to 140 (MGGLLFLPALCGEVFWAAGIL). The Extracellular segment spans residues 141 to 158 (AALGATLSVIIDMDHRTS). The chain crosses the membrane as a helical span at residues 159 to 179 (VILSSCIAIFYTLFGGLYSVA). Over 180-185 (YTDVIQ) the chain is Cytoplasmic. A helical membrane pass occupies residues 186-206 (LFCIFIGLWMCIPFAWSNEHV). At 207–225 (GSLSDLEVDWIGHVEPKKH) the chain is on the extracellular side. A helical transmembrane segment spans residues 226–246 (WLYIDYGLLLVFGGIPWQVYF). The Cytoplasmic segment spans residues 247–262 (QRVLSSKTAGRAQLLS). The chain crosses the membrane as a helical span at residues 263-283 (YVAAAGCILMAIPPVLIGAIA). Topologically, residues 284–305 (KATPWNETDYKGPYPLTVDETS) are extracellular. The N-linked (GlcNAc...) asparagine glycan is linked to Asn-289. Residues 306–326 (MILPMVLQYLTPDFVSFFGLG) form a helical membrane-spanning segment. Over 327-364 (AVSAAVMSSADSSVLSAASMFARNVYKLIFRQKASEME) the chain is Cytoplasmic. A helical transmembrane segment spans residues 365-385 (IIWVMRVAIIVVGILATIMAL). Topologically, residues 386–394 (TIPSIYGLW) are extracellular. A helical transmembrane segment spans residues 395–415 (SMCSDLVYVILFPQLLMVVHF). Topologically, residues 416–424 (KKHCNTYGS) are cytoplasmic. The helical transmembrane segment at 425–445 (LSAYIVALAIRLSGGEAILGL) threads the bilayer. Residues 446-467 (APLIKYPGYDEETKEQMFPFRT) lie on the Extracellular side of the membrane. The helical transmembrane segment at 468-488 (MAMLLSLVTLISVSWWTKMMF) threads the bilayer. Residues 489-614 (ESGKLPPSYD…PTAEQDNTAF (126 aa)) lie on the Cytoplasmic side of the membrane. The interval 583-614 (ATGVKPSGGGGGHLQSQSGMAMPTAEQDNTAF) is disordered.

It belongs to the sodium:solute symporter (SSF) (TC 2.A.21) family.

The protein resides in the membrane. Imports choline from the extracellular space to the neuron with high affinity. Rate-limiting step in acetylcholine synthesis. Sodium ion and chloride ion dependent. The chain is High-affinity choline transporter 1 from Drosophila melanogaster (Fruit fly).